Here is a 168-residue protein sequence, read N- to C-terminus: Crossover junction endodeoxyribonuclease RuvC (168 aa).

Active-site residues include D8, E68, and D140. Mg(2+) contacts are provided by D8, E68, and D140.

This sequence belongs to the RuvC family. Homodimer which binds Holliday junction (HJ) DNA. The HJ becomes 2-fold symmetrical on binding to RuvC with unstacked arms; it has a different conformation from HJ DNA in complex with RuvA. In the full resolvosome a probable DNA-RuvA(4)-RuvB(12)-RuvC(2) complex forms which resolves the HJ. The cofactor is Mg(2+).

It localises to the cytoplasm. It catalyses the reaction Endonucleolytic cleavage at a junction such as a reciprocal single-stranded crossover between two homologous DNA duplexes (Holliday junction).. In terms of biological role, the RuvA-RuvB-RuvC complex processes Holliday junction (HJ) DNA during genetic recombination and DNA repair. Endonuclease that resolves HJ intermediates. Cleaves cruciform DNA by making single-stranded nicks across the HJ at symmetrical positions within the homologous arms, yielding a 5'-phosphate and a 3'-hydroxyl group; requires a central core of homology in the junction. The consensus cleavage sequence is 5'-(A/T)TT(C/G)-3'. Cleavage occurs on the 3'-side of the TT dinucleotide at the point of strand exchange. HJ branch migration catalyzed by RuvA-RuvB allows RuvC to scan DNA until it finds its consensus sequence, where it cleaves and resolves the cruciform DNA. The sequence is that of Crossover junction endodeoxyribonuclease RuvC from Gluconacetobacter diazotrophicus (strain ATCC 49037 / DSM 5601 / CCUG 37298 / CIP 103539 / LMG 7603 / PAl5).